Consider the following 440-residue polypeptide: Xylose isomerase (440 aa).

Residues His100 and Asp103 contribute to the active site. Residues Glu231, Glu267, His270, Asp295, Asp306, Asp308, and Asp338 each coordinate Mg(2+).

The protein belongs to the xylose isomerase family. As to quaternary structure, homotetramer. It depends on Mg(2+) as a cofactor.

It is found in the cytoplasm. It carries out the reaction alpha-D-xylose = alpha-D-xylulofuranose. The chain is Xylose isomerase from Burkholderia ambifaria (strain MC40-6).